The sequence spans 709 residues: Fatty acid oxidation complex subunit alpha (709 aa).

The tract at residues methionine 1–proline 188 is enoyl-CoA hydratase. The tract at residues arginine 308 to phenylalanine 709 is 3-hydroxyacyl-CoA dehydrogenase.

This sequence in the N-terminal section; belongs to the enoyl-CoA hydratase/isomerase family. In the central section; belongs to the 3-hydroxyacyl-CoA dehydrogenase family. Heterotetramer of two alpha chains (FadJ) and two beta chains (FadI).

It is found in the cytoplasm. It carries out the reaction a (3S)-3-hydroxyacyl-CoA = a (2E)-enoyl-CoA + H2O. The catalysed reaction is a 4-saturated-(3S)-3-hydroxyacyl-CoA = a (3E)-enoyl-CoA + H2O. The enzyme catalyses a (3S)-3-hydroxyacyl-CoA + NAD(+) = a 3-oxoacyl-CoA + NADH + H(+). It catalyses the reaction (3S)-3-hydroxybutanoyl-CoA = (3R)-3-hydroxybutanoyl-CoA. Its pathway is lipid metabolism; fatty acid beta-oxidation. Catalyzes the formation of a hydroxyacyl-CoA by addition of water on enoyl-CoA. Also exhibits 3-hydroxyacyl-CoA epimerase and 3-hydroxyacyl-CoA dehydrogenase activities. This Shewanella sp. (strain MR-4) protein is Fatty acid oxidation complex subunit alpha.